Here is a 355-residue protein sequence, read N- to C-terminus: Undecaprenyl-phosphate alpha-N-acetylglucosaminyl 1-phosphate transferase (355 aa).

8 consecutive transmembrane segments (helical) span residues 1-21, 39-59, 63-83, 123-143, 182-202, 208-228, 237-257, and 315-335; these read MLSI…MRPL, GTIP…YYLM, QLRL…IGIL, FQLT…IAII, WSFA…GIPF, VFMG…ILLL, MNPV…VAII, and WAMF…ITHA.

This sequence belongs to the glycosyltransferase 4 family. WecA subfamily. The cofactor is Mg(2+). Mn(2+) serves as cofactor.

The protein resides in the cell inner membrane. The enzyme catalyses di-trans,octa-cis-undecaprenyl phosphate + UDP-N-acetyl-alpha-D-glucosamine = N-acetyl-alpha-D-glucosaminyl-di-trans,octa-cis-undecaprenyl diphosphate + UMP. It participates in bacterial outer membrane biogenesis; LPS O-antigen biosynthesis. Catalyzes the transfer of the GlcNAc-1-phosphate moiety from UDP-GlcNAc onto the carrier lipid undecaprenyl phosphate (C55-P), yielding GlcNAc-pyrophosphoryl-undecaprenyl (GlcNAc-PP-C55). The polypeptide is Undecaprenyl-phosphate alpha-N-acetylglucosaminyl 1-phosphate transferase (Haemophilus influenzae (strain ATCC 51907 / DSM 11121 / KW20 / Rd)).